A 70-amino-acid chain; its full sequence is Adenylate kinase (70 aa).

10–15 (GAGKGT) is an ATP binding site. Residues 30–59 (STGDLFRANISKQTELGKLAKSYMDKGELV) form an NMP region. AMP is bound by residues T31, R36, and 57-59 (ELV).

It belongs to the adenylate kinase family. As to quaternary structure, monomer.

It localises to the cytoplasm. The catalysed reaction is AMP + ATP = 2 ADP. Its pathway is purine metabolism; AMP biosynthesis via salvage pathway; AMP from ADP: step 1/1. Its function is as follows. Catalyzes the reversible transfer of the terminal phosphate group between ATP and AMP. Plays an important role in cellular energy homeostasis and in adenine nucleotide metabolism. The protein is Adenylate kinase (adk) of Streptomyces scabiei.